A 149-amino-acid chain; its full sequence is Calmodulin-3 (149 aa).

Position 2 is an N-acetylalanine (Ala2). 4 consecutive EF-hand domains span residues 8-43, 44-79, 81-116, and 117-149; these read DQIAEFKEAFSLFDKDGDGCITTKELGTVMRSLGQN, PTEAELQDMINEVDADGNGTIDFPEFLNLMARKMKD, DSEEELKEAFRVFDKDQNGFISAAELRHVMTNLGEK, and LTDEEVEEMIREADVDGDGQINYDEFVKVMMAK. Ca(2+) is bound by residues Asp21, Asp23, Asp25, Cys27, Glu32, Asp57, Asp59, Asn61, Thr63, Glu68, Asp94, Asp96, Asn98, and Glu105. Lys116 is subject to N6,N6,N6-trimethyllysine. Ca(2+) is bound by residues Asp130, Asp132, Asp134, Gln136, and Glu141.

This sequence belongs to the calmodulin family.

In terms of biological role, calmodulin mediates the control of a large number of enzymes, ion channels and other proteins by Ca(2+). Among the enzymes to be stimulated by the calmodulin-Ca(2+) complex are a number of protein kinases and phosphatases. The protein is Calmodulin-3 (CAM3) of Oryza sativa subsp. japonica (Rice).